We begin with the raw amino-acid sequence, 483 residues long: Bifunctional protein HldE (483 aa).

The ribokinase stretch occupies residues 1–327 (MDDALAHLPR…ACASSAQGEP (327 aa)). An ATP-binding site is contributed by 201 to 204 (NRKE). Aspartate 272 is a catalytic residue. The segment at 354-483 (FTNGCFDLLH…TTNLIARMNS (130 aa)) is cytidylyltransferase.

In the N-terminal section; belongs to the carbohydrate kinase PfkB family. The protein in the C-terminal section; belongs to the cytidylyltransferase family. As to quaternary structure, homodimer.

It carries out the reaction D-glycero-beta-D-manno-heptose 7-phosphate + ATP = D-glycero-beta-D-manno-heptose 1,7-bisphosphate + ADP + H(+). The catalysed reaction is D-glycero-beta-D-manno-heptose 1-phosphate + ATP + H(+) = ADP-D-glycero-beta-D-manno-heptose + diphosphate. Its pathway is nucleotide-sugar biosynthesis; ADP-L-glycero-beta-D-manno-heptose biosynthesis; ADP-L-glycero-beta-D-manno-heptose from D-glycero-beta-D-manno-heptose 7-phosphate: step 1/4. It functions in the pathway nucleotide-sugar biosynthesis; ADP-L-glycero-beta-D-manno-heptose biosynthesis; ADP-L-glycero-beta-D-manno-heptose from D-glycero-beta-D-manno-heptose 7-phosphate: step 3/4. Catalyzes the phosphorylation of D-glycero-D-manno-heptose 7-phosphate at the C-1 position to selectively form D-glycero-beta-D-manno-heptose-1,7-bisphosphate. In terms of biological role, catalyzes the ADP transfer from ATP to D-glycero-beta-D-manno-heptose 1-phosphate, yielding ADP-D-glycero-beta-D-manno-heptose. The polypeptide is Bifunctional protein HldE (Caulobacter vibrioides (strain ATCC 19089 / CIP 103742 / CB 15) (Caulobacter crescentus)).